A 375-amino-acid chain; its full sequence is Secondary metabolism regulator laeA (375 aa).

Polar residues predominate over residues 15–26 (ASPNRNNYSYQG). Disordered regions lie at residues 15–37 (ASPN…RSRQ) and 50–75 (QEPP…TSHY).

This sequence belongs to the methyltransferase superfamily. LaeA methyltransferase family. In terms of assembly, component of the heterotrimeric velvet complex composed of laeA, veA and velB; VeA acting as a bridging protein between laeA and velB.

The protein resides in the nucleus. The catalysed reaction is L-methionyl-[protein] + S-adenosyl-L-methionine = S-methyl-L-methionyl-[protein] + S-adenosyl-L-homocysteine. In terms of biological role, methyltransferase that performs automethylation. No other methyl-accepting substrate has been identified yet. Component of the velvet transcription factor complex that acts as a global regulator for secondary metabolite gene expression. Controls the expression of the citric acid, demethylkotanin, orlandin, asperrubrol, tensidol B, atromentin and JBIR8 gene clusters. Also represses the expression of genes related to the production of BMS-192548 and aspernigrin A. The chain is Secondary metabolism regulator laeA from Aspergillus niger (strain ATCC 1015 / CBS 113.46 / FGSC A1144 / LSHB Ac4 / NCTC 3858a / NRRL 328 / USDA 3528.7).